Reading from the N-terminus, the 222-residue chain is Vespryn (222 aa).

The first 44 residues, 1–44 (MSPSAGLQFSLYFLQTKKVLWKLTDKEKGLCYILLFTLCFFADQ), serve as a signal peptide directing secretion. Residues 45-52 (ENGGKALA) constitute a propeptide that is removed on maturation. Positions 53 to 159 (SPPGIWKRAD…RIWQMGLWWL (107 aa)) constitute a B30.2/SPRY domain. Residues 160-222 (RHLETDPGRV…LGGTVSLTTL (63 aa)) constitute a propeptide that is removed on maturation. The N-linked (GlcNAc...) asparagine glycan is linked to Asn195.

This sequence belongs to the ohanin/vespryn family. In terms of tissue distribution, expressed by the venom gland.

It is found in the secreted. Its function is as follows. Neurotoxin that produces dose-dependent hypolocomotion and hyperalgesia in mice. May directly act on the central nervous system, as it is 6500-fold more potent when administered intracerebroventricularly than intraperitoneal. This Crotalus adamanteus (Eastern diamondback rattlesnake) protein is Vespryn.